A 164-amino-acid polypeptide reads, in one-letter code: Putative histone H2B type 2-D (164 aa).

Positions 1–12 (MPEPAKFAPAPK) are enriched in low complexity. The disordered stretch occupies residues 1–33 (MPEPAKFAPAPKKGSKKAVTKAQKKDGKKRKRS). P2 carries the N-acetylproline modification. K6 bears the N6-(2-hydroxyisobutyryl)lysine; alternate mark. N6-(beta-hydroxybutyryl)lysine; alternate is present on residues K6 and K12. Residues K6, K12, and K13 each carry the N6-acetyllysine; alternate modification. The residue at position 6 (K6) is an N6-butyryllysine; alternate. An N6-crotonyllysine; alternate mark is found at K6, K12, and K13. N6-lactoyllysine; alternate occurs at positions 6 and 12. K6 is covalently cross-linked (Glycyl lysine isopeptide (Lys-Gly) (interchain with G-Cter in SUMO2); alternate). The residue at position 13 (K13) is an N6-(2-hydroxyisobutyryl)lysine; alternate. The residue at position 15 (S15) is a Phosphoserine; by STK4/MST1. Residues K16, K17, K21, and K24 each carry the N6-acetyllysine; alternate modification. Residues K16, K17, K21, and K24 each carry the N6-crotonyllysine; alternate modification. K16, K17, K21, and K24 each carry N6-lactoyllysine; alternate. 2 positions are modified to N6-(beta-hydroxybutyryl)lysine; alternate: K17 and K21. The residue at position 17 (K17) is an N6-glutaryllysine; alternate. Residues K21 and K24 each carry the N6-(2-hydroxyisobutyryl)lysine; alternate modification. The residue at position 21 (K21) is an N6-butyryllysine; alternate. K21 is covalently cross-linked (Glycyl lysine isopeptide (Lys-Gly) (interchain with G-Cter in SUMO2); alternate). K25 is subject to N6-(2-hydroxyisobutyryl)lysine. An N6-(2-hydroxyisobutyryl)lysine; alternate modification is found at K35. K35 bears the N6-(beta-hydroxybutyryl)lysine; alternate mark. K35 is subject to N6-crotonyllysine; alternate. Residue K35 is modified to N6-glutaryllysine; alternate. K35 carries the post-translational modification N6-succinyllysine; alternate. Residue K35 forms a Glycyl lysine isopeptide (Lys-Gly) (interchain with G-Cter in ubiquitin); alternate linkage. A Phosphoserine; by AMPK modification is found at S37. K44, K47, and K58 each carry N6-(2-hydroxyisobutyryl)lysine; alternate. K44 is subject to N6-lactoyllysine; alternate. N6-glutaryllysine; alternate is present on residues K44 and K47. K47 carries the N6-methyllysine; alternate modification. N6,N6-dimethyllysine; alternate is present on K58. R80 is modified (dimethylated arginine). K86 carries the N6-(2-hydroxyisobutyryl)lysine; alternate modification. Position 86 is an N6-(beta-hydroxybutyryl)lysine; alternate (K86). K86 carries the post-translational modification N6-acetyllysine; alternate. Position 86 is an N6-lactoyllysine; alternate (K86). An N6,N6,N6-trimethyllysine; alternate modification is found at K86. Omega-N-methylarginine is present on residues R87 and R93. A disordered region spans residues 111 to 140 (PCPRAPRRSPSTPAPSESLPGPGARSLPPS).

This sequence belongs to the histone H2B family. In terms of assembly, the nucleosome is a histone octamer containing two molecules each of H2A, H2B, H3 and H4 assembled in one H3-H4 heterotetramer and two H2A-H2B heterodimers. The octamer wraps approximately 147 bp of DNA. In terms of processing, phosphorylation at Ser-37 (H2BS36ph) by AMPK in response to stress promotes transcription. Phosphorylated on Ser-15 (H2BS14ph) by STK4/MST1 during apoptosis; which facilitates apoptotic chromatin condensation. Also phosphorylated on Ser-15 in response to DNA double strand breaks (DSBs), and in correlation with somatic hypermutation and immunoglobulin class-switch recombination. Crotonylation (Kcr) is specifically present in male germ cells and marks testis-specific genes in post-meiotic cells, including X-linked genes that escape sex chromosome inactivation in haploid cells. Crotonylation marks active promoters and enhancers and confers resistance to transcriptional repressors. It is also associated with post-meiotically activated genes on autosomes. Post-translationally, lactylated in macrophages by EP300/P300 by using lactoyl-CoA directly derived from endogenous or exogenous lactate, leading to stimulates gene transcription.

Its subcellular location is the nucleus. The protein localises to the chromosome. Its function is as follows. Core component of nucleosome. Nucleosomes wrap and compact DNA into chromatin, limiting DNA accessibility to the cellular machineries which require DNA as a template. Histones thereby play a central role in transcription regulation, DNA repair, DNA replication and chromosomal stability. DNA accessibility is regulated via a complex set of post-translational modifications of histones, also called histone code, and nucleosome remodeling. The chain is Putative histone H2B type 2-D from Homo sapiens (Human).